We begin with the raw amino-acid sequence, 119 residues long: Large ribosomal subunit protein uL18 (119 aa).

The disordered stretch occupies residues 1–24 (MITKQDKNQVRKKRHARVRSKISG). Residues 10–20 (VRKKRHARVRS) show a composition bias toward basic residues.

It belongs to the universal ribosomal protein uL18 family. In terms of assembly, part of the 50S ribosomal subunit; part of the 5S rRNA/L5/L18/L25 subcomplex. Contacts the 5S and 23S rRNAs.

Its function is as follows. This is one of the proteins that bind and probably mediate the attachment of the 5S RNA into the large ribosomal subunit, where it forms part of the central protuberance. This Lysinibacillus sphaericus (strain C3-41) protein is Large ribosomal subunit protein uL18.